Consider the following 491-residue polypeptide: Ribonuclease Y (491 aa).

Residues 4–24 form a helical membrane-spanning segment; it reads LIATVGVVAVAALVIAIFVVI. The KH domain maps to 181–247; the sequence is VVSVVHLPGD…RVALERLVDD (67 aa). The HD domain maps to 307-400; it reads VLKHLVETAH…TQAADAISGG (94 aa).

The protein belongs to the RNase Y family.

It localises to the cell membrane. In terms of biological role, endoribonuclease that initiates mRNA decay. This is Ribonuclease Y from Acidothermus cellulolyticus (strain ATCC 43068 / DSM 8971 / 11B).